The following is a 465-amino-acid chain: Alpha-2A adrenergic receptor (465 aa).

Topologically, residues 1-48 (MFRQEQPLAEGSFAPMGSLQPEAGNASWNGTEAPGGGARATPYSLQVT) are extracellular. Residues N25 and N29 are each glycosylated (N-linked (GlcNAc...) asparagine). Residues 49 to 74 (LTLVCLAGLLMLFTVFGNVLVIIAVF) traverse the membrane as a helical segment. Residues 75–85 (TSRALKAPQNL) are Cytoplasmic-facing. Residues 86 to 111 (FLVSLASADILVATLVIPFSLANEVM) form a helical membrane-spanning segment. The Extracellular segment spans residues 112–121 (GYWYFGKAWC). C121 and C203 are joined by a disulfide. Residues 122–144 (EIYLALDVLFCTSSIVHLCAISL) traverse the membrane as a helical segment. Residues 145–164 (DRYWSITQAIEYNLKRTPRR) lie on the Cytoplasmic side of the membrane. Residues 165 to 188 (IKAIIVTVWVISAVISFPPLISIE) form a helical membrane-spanning segment. Topologically, residues 189–207 (KKAGGGGQQPAEPRCEIND) are extracellular. A helical membrane pass occupies residues 208 to 232 (QKWYVISSCIGSFFAPCLIMILVYV). Topologically, residues 233–389 (RIYQIAKRRT…RQNREKRFTF (157 aa)) are cytoplasmic. The disordered stretch occupies residues 242-377 (TRVPPSRRGP…RGGVAKASRW (136 aa)). The span at 313–330 (SSEHAERPPGPRRSERGP) shows a compositional bias: basic and acidic residues. The residue at position 346 (S346) is a Phosphoserine. At R368 the chain carries Omega-N-methylarginine. A helical membrane pass occupies residues 390–414 (VLAVVIGVFVVCWFPFFFTYTLTAV). Topologically, residues 415–424 (GCSVPPTLFK) are extracellular. The chain crosses the membrane as a helical span at residues 425–445 (FFFWFGYCNSSLNPVIYTIFN). At 446–465 (HDFRRAFKKILCRGDRKRIV) the chain is on the cytoplasmic side. C457 is lipidated: S-palmitoyl cysteine.

This sequence belongs to the G-protein coupled receptor 1 family. Adrenergic receptor subfamily. ADRA2A sub-subfamily.

The protein localises to the cell membrane. Alpha-2 adrenergic receptors mediate the catecholamine-induced inhibition of adenylate cyclase through the action of G proteins. This chain is Alpha-2A adrenergic receptor, found in Sus scrofa (Pig).